The sequence spans 509 residues: MTAPHKVAFPARCAVNICYDKHLCSQVFPAGIPVEGFFEGMVELFDADLKRKGFDGVALPAGSYELHKINGVRLDINKSLDELGVQDGNTLVLVPRVAGESFEPQYESLSTGLAAMGKWLGRDGGDRMFAPVTSLTAAHTAMAIIAMAVGVVLALTLRTRTITDSPVPAAMAGGIGVLLVIGALVVWWGWRERRDLFSGFGWLAVVLLAVAAACAPPGALGAAHALIGLVVVVLGAITIGVATRKRWQTAVVTAVVTVCGILAAVAAVRMFRPVSMQVLAICVLVGLLVLIRMTPTVALWVARVRPPHFGSITGRDLFARRAGMPVDTVAPVSEADADDEDNELTDITARGTAIAASARLVNAVQVGMCVGVSLVLPAAVWGVLTPRQPWAWLALLVAGLTVGLFITQGRGFAAKYQAVALVCGASAAVCAGVLKYALDTPKGVQTGLLWPAIFVAAFAALGLAVALVVPATRFRPIIRLTVEWLEVLAMIALLPAAAALGGLFAWLRH.

11 helical membrane-spanning segments follow: residues 135-155 (LTAA…VLAL), 170-190 (AMAG…WWGW), 196-216 (LFSG…ACAP), 222-242 (AAHA…IGVA), 248-268 (QTAV…VAAV), 281-301 (ICVL…ALWV), 364-384 (VQVG…WGVL), 389-409 (PWAW…ITQG), 418-438 (AVAL…KYAL), 449-469 (LWPA…ALVV), and 487-507 (VLAM…FAWL).

This sequence belongs to the EccD/Snm4 family. In terms of assembly, part of the ESX-2 / type VII secretion system (T7SS), which is composed of cytosolic and membrane components.

The protein resides in the cell membrane. The protein is ESX-2 secretion system protein eccD2 (eccD2) of Mycobacterium tuberculosis (strain CDC 1551 / Oshkosh).